A 210-amino-acid polypeptide reads, in one-letter code: Na(+)-translocating NADH-quinone reductase subunit D (210 aa).

A run of 5 helical transmembrane segments spans residues 42–62, 72–92, 103–123, 131–151, and 178–198; these read FVMT…VSVI, IIVQ…ILKA, VFVG…AFAM, LIDG…VGFF, and NGLM…IWAI.

Belongs to the NqrDE/RnfAE family. Composed of six subunits; NqrA, NqrB, NqrC, NqrD, NqrE and NqrF.

It localises to the cell inner membrane. The catalysed reaction is a ubiquinone + n Na(+)(in) + NADH + H(+) = a ubiquinol + n Na(+)(out) + NAD(+). NQR complex catalyzes the reduction of ubiquinone-1 to ubiquinol by two successive reactions, coupled with the transport of Na(+) ions from the cytoplasm to the periplasm. NqrA to NqrE are probably involved in the second step, the conversion of ubisemiquinone to ubiquinol. The protein is Na(+)-translocating NADH-quinone reductase subunit D of Vibrio vulnificus (strain YJ016).